The sequence spans 234 residues: (5-formylfuran-3-yl)methyl phosphate synthase (234 aa).

The active-site Schiff-base intermediate with substrate is the K27. The active-site Proton acceptor is the K85.

Belongs to the MfnB family.

It carries out the reaction 2 D-glyceraldehyde 3-phosphate = 4-(hydroxymethyl)-2-furancarboxaldehyde phosphate + phosphate + 2 H2O. It participates in cofactor biosynthesis; methanofuran biosynthesis. In terms of biological role, catalyzes the formation of 4-(hydroxymethyl)-2-furancarboxaldehyde phosphate (4-HFC-P) from two molecules of glyceraldehyde-3-P (GA-3-P). The sequence is that of (5-formylfuran-3-yl)methyl phosphate synthase from Methanosarcina mazei (strain ATCC BAA-159 / DSM 3647 / Goe1 / Go1 / JCM 11833 / OCM 88) (Methanosarcina frisia).